Consider the following 164-residue polypeptide: Nucleotide-binding protein EF_1165 (164 aa).

The protein belongs to the YajQ family.

In terms of biological role, nucleotide-binding protein. This Enterococcus faecalis (strain ATCC 700802 / V583) protein is Nucleotide-binding protein EF_1165.